We begin with the raw amino-acid sequence, 124 residues long: Keratin-associated protein 12-2 (124 aa).

Tandem repeats lie at residues 10-13 (CQAA), 14-18 (CVPSS), 19-23 (CQPSC), 24-28 (STSSP), 33-38 (CFTSSL), 39-43 (CQPTC), 44-48 (STSST), 49-52 (CQAT), 53-57 (CVPVS), 58-62 (YRPAV), 63-67 (CLPVT), 68-72 (YKPTL), 73-77 (CVTPS), 78-82 (CQSSV), 83-87 (FLPVS), 88-92 (YRPAV), 98-102 (CQSSG), 103-107 (CYQPS), 108-112 (CPTLV), and 113-117 (YRPIS). A 20 X 5 AA approximate repeats region spans residues 10-117 (CQAACVPSSC…CPTLVYRPIS (108 aa)).

The protein belongs to the KRTAP type 12 family. As to quaternary structure, interacts with hair keratins.

Functionally, in the hair cortex, hair keratin intermediate filaments are embedded in an interfilamentous matrix, consisting of hair keratin-associated proteins (KRTAP), which are essential for the formation of a rigid and resistant hair shaft through their extensive disulfide bond cross-linking with abundant cysteine residues of hair keratins. The matrix proteins include the high-sulfur and high-glycine-tyrosine keratins. The sequence is that of Keratin-associated protein 12-2 from Bos taurus (Bovine).